The primary structure comprises 110 residues: UPF0060 membrane protein Haur_1798 (110 aa).

Transmembrane regions (helical) follow at residues 7-27, 33-53, 63-83, and 89-109; these read VVLFILAGLAEIAGGYLVWQW, SIWFGVLGAILLVGYGFLPTL, VYAAYGGVFIVLSLAWGWLID, and QPSLVGACLALVGAAIILYWP.

It belongs to the UPF0060 family.

It localises to the cell membrane. This chain is UPF0060 membrane protein Haur_1798, found in Herpetosiphon aurantiacus (strain ATCC 23779 / DSM 785 / 114-95).